Consider the following 627-residue polypeptide: Protein fem-1 homolog B (627 aa).

ANK repeat units lie at residues 45–74, 87–116, 120–149, and 153–182; these read QRST…VQTQ, DGAT…NVNH, TNST…NISI, and YDNT…DPNA. Residues His-185, Cys-186, and His-218 each coordinate Zn(2+). ANK repeat units follow at residues 186–215 and 218–248; these read CGAT…AIVV and HGMT…DRRS. Residues 344–377 form a TPR repeat; the sequence is SHPIIYRGAVYADNMEFEQCIKLWLHALHLRQKG. ANK repeat units lie at residues 483–527 and 531–568; these read EGFT…EVNA and EGNS…HTDM.

This sequence belongs to the fem-1 family. Component of a CRL2 E3 ubiquitin-protein ligase complex, also named ECS (Elongin BC-CUL2/5-SOCS-box protein) complex, composed of CUL2, Elongin BC (ELOB and ELOC), RBX1 and substrate-specific adapter FEM1B. Homooligomer. Interacts with PPM1F and PHTF1. Interacts with the death domain of FAS/TNFRSF6 and TNFRSF1A. Interacts with CHEK1. Interacts with NKX3-1. As to expression, present in adult testis (at protein level).

The protein resides in the cytoplasm. The protein localises to the nucleus. It participates in protein modification; protein ubiquitination. With respect to regulation, activity of the CRL2(FEM1B) complex toward FNIP1 is inhibited by BEX family proteins (BEX1, BEX2, BEX3 and/or BEX4) in absence of reductive stress. Mechanistically, BEX proteins act as pseudosubstrate inhibitors that associate with FEM1B via zinc in absence of reductive stress, thereby preventing association between FEM1B and FNIP1. In terms of biological role, substrate-recognition component of a Cul2-RING (CRL2) E3 ubiquitin-protein ligase complex of the DesCEND (destruction via C-end degrons) pathway, which recognizes a C-degron located at the extreme C terminus of target proteins, leading to their ubiquitination and degradation. The C-degron recognized by the DesCEND pathway is usually a motif of less than ten residues and can be present in full-length proteins, truncated proteins or proteolytically cleaved forms. The CRL2(FEM1B) complex specifically recognizes proteins ending with -Gly-Leu-Asp-Arg, such as CDK5R1, leading to their ubiquitination and degradation. Also acts as a regulator of the reductive stress response by mediating ubiquitination of reduced FNIP1: in response to reductive stress, the CRL2(FEM1B) complex specifically recognizes a conserved Cys degron in FNIP1 when this degron is reduced, leading to FNIP1 degradation and subsequent activation of mitochondria to recalibrate reactive oxygen species (ROS). Mechanistically, recognizes and binds reduced FNIP1 through two interface zinc ions, which act as a molecular glue that recruit reduced FNIP1 to FEM1B. Promotes ubiquitination of GLI1, suppressing GLI1 transcriptional activator activity. Promotes ubiquitination and degradation of ANKRD37. Promotes ubiquitination and degradation of SLBP. Involved in apoptosis by acting as a death receptor-associated protein that mediates apoptosis. Also involved in glucose homeostasis in pancreatic islet. May also act as an adapter/mediator in replication stress-induced signaling that leads to the activation of CHEK1. The protein is Protein fem-1 homolog B of Rattus norvegicus (Rat).